A 185-amino-acid chain; its full sequence is Acireductone dioxygenase (185 aa).

Fe(2+) is bound by residues His-97, His-99, Glu-103, and His-141. Ni(2+)-binding residues include His-97, His-99, Glu-103, and His-141.

The protein belongs to the acireductone dioxygenase (ARD) family. Monomer. It depends on Fe(2+) as a cofactor. Ni(2+) serves as cofactor.

The catalysed reaction is 1,2-dihydroxy-5-(methylsulfanyl)pent-1-en-3-one + O2 = 3-(methylsulfanyl)propanoate + CO + formate + 2 H(+). It catalyses the reaction 1,2-dihydroxy-5-(methylsulfanyl)pent-1-en-3-one + O2 = 4-methylsulfanyl-2-oxobutanoate + formate + 2 H(+). It functions in the pathway amino-acid biosynthesis; L-methionine biosynthesis via salvage pathway; L-methionine from S-methyl-5-thio-alpha-D-ribose 1-phosphate: step 5/6. Functionally, catalyzes 2 different reactions between oxygen and the acireductone 1,2-dihydroxy-3-keto-5-methylthiopentene (DHK-MTPene) depending upon the metal bound in the active site. Fe-containing acireductone dioxygenase (Fe-ARD) produces formate and 2-keto-4-methylthiobutyrate (KMTB), the alpha-ketoacid precursor of methionine in the methionine recycle pathway. Ni-containing acireductone dioxygenase (Ni-ARD) produces methylthiopropionate, carbon monoxide and formate, and does not lie on the methionine recycle pathway. The chain is Acireductone dioxygenase from Stenotrophomonas maltophilia (strain K279a).